The primary structure comprises 330 residues: Free fatty acid receptor 2 (330 aa).

Residues 1-12 (MLPDWKSSLILM) are Extracellular-facing. A helical transmembrane segment spans residues 13 to 33 (AYIIIFLTGLPANLLALRAFV). Over 34–41 (GRIRQPQP) the chain is Cytoplasmic. Residues 42–62 (APVHILLLSLTLADLLLLLLL) traverse the membrane as a helical segment. Residues 63 to 84 (PFKIIEAASNFRWYLPKVVCAL) lie on the Extracellular side of the membrane. A helical membrane pass occupies residues 85–105 (TSFGFYSSIYCSTWLLAGISI). At 106 to 126 (ERYLGVAFPVQYKLSRRPLYG) the chain is on the cytoplasmic side. The helical transmembrane segment at 127 to 147 (VIAALVAWVMSFGHCTIVIIV) threads the bilayer. At 148–173 (QYLNTTEQVRSGNEITCYENFTDNQL) the chain is on the extracellular side. Asparagine 151 and asparagine 167 each carry an N-linked (GlcNAc...) asparagine glycan. Residues 174–194 (DVVLPVRLELCLVLFFIPMAV) form a helical membrane-spanning segment. Residues 195-219 (TIFCYWRFVWIMLSQPLVGAQRRRR) are Cytoplasmic-facing. Residues 220-240 (AVGLAVVTLLNFLVCFGPYNV) traverse the membrane as a helical segment. At 241–255 (SHLVGYHQRKSPWWR) the chain is on the extracellular side. A helical transmembrane segment spans residues 256-276 (SIAVVFSSLNASLDPLLFYFS). Residues 277-330 (SSVVRRAFGRGLQVLRNQGSSLLGRRGKDTAEGTNEDRGVGQGEGMPSSDFTTE) lie on the Cytoplasmic side of the membrane. The interval 299 to 330 (LGRRGKDTAEGTNEDRGVGQGEGMPSSDFTTE) is disordered. Basic and acidic residues predominate over residues 302–315 (RGKDTAEGTNEDRG).

Belongs to the G-protein coupled receptor 1 family. As to quaternary structure, interacts with FCN1 (via Fibrinogen C-terminal domain). In terms of tissue distribution, expressed at relatively high levels in peripheral blood leukocytes and, to lesser extent, in spleen.

Its subcellular location is the cell membrane. Functionally, g protein-coupled receptor that is activated by a major product of dietary fiber digestion, the short chain fatty acids (SCFAs), and that plays a role in the regulation of whole-body energy homeostasis and in intestinal immunity. In omnivorous mammals, the short chain fatty acids acetate, propionate and butyrate are produced primarily by the gut microbiome that metabolizes dietary fibers. SCFAs serve as a source of energy but also act as signaling molecules. That G protein-coupled receptor is probably coupled to the pertussis toxin-sensitive, G(i/o)-alpha family of G proteins but also to the Gq family. Its activation results in the formation of inositol 1,4,5-trisphosphate, the mobilization of intracellular calcium, the phosphorylation of the MAPK3/ERK1 and MAPK1/ERK2 kinases and the inhibition of intracellular cAMP accumulation. May play a role in glucose homeostasis by regulating the secretion of GLP-1, in response to short-chain fatty acids accumulating in the intestine. May also regulate the production of LEP/Leptin, a hormone acting on the central nervous system to inhibit food intake. Finally, may also regulate whole-body energy homeostasis through adipogenesis regulating both differentiation and lipid storage of adipocytes. In parallel to its role in energy homeostasis, may also mediate the activation of the inflammatory and immune responses by SCFA in the intestine, regulating the rapid production of chemokines and cytokines. May also play a role in the resolution of the inflammatory response and control chemotaxis in neutrophils. In addition to SCFAs, may also be activated by the extracellular lectin FCN1 in a process leading to activation of monocytes and inducing the secretion of interleukin-8/IL-8 in response to the presence of microbes. Among SCFAs, the fatty acids containing less than 6 carbons, the most potent activators are probably acetate, propionate and butyrate. Exhibits a SCFA-independent constitutive G protein-coupled receptor activity. The polypeptide is Free fatty acid receptor 2 (FFAR2) (Homo sapiens (Human)).